Consider the following 585-residue polypeptide: Ras-specific guanine nucleotide-releasing factor RalGPS1 (585 aa).

Positions 50–289 (TPEEFASQIT…YKLSLRIEPG (240 aa)) constitute a Ras-GEF domain. Disordered regions lie at residues 289-342 (GSSS…KSHS) and 378-410 (RSPRRGLTHTSSTAITNGLSLGSSESSEFSEEM). Residues 303–312 (AGPSAGSSSA) show a composition bias toward low complexity. The PXXP signature appears at 330 to 333 (PTPP). Polar residues predominate over residues 385–396 (THTSSTAITNGL). One can recognise a PH domain in the interval 459–571 (VPTMEGPLRR…WHKHLDDACK (113 aa)). The required for stimulation of nucleotide exchange by RALA stretch occupies residues 461–585 (TMEGPLRRKT…QVPANLMSFE (125 aa)).

In terms of assembly, interacts with the SH3 domains of GRB2, NCK1, PLCG1 and SRC.

The protein localises to the cytoplasm. Its subcellular location is the cell membrane. Functionally, guanine nucleotide exchange factor for the small GTPase RALA. May be involved in cytoskeleton organization. The polypeptide is Ras-specific guanine nucleotide-releasing factor RalGPS1 (Ralgps1) (Mus musculus (Mouse)).